Consider the following 243-residue polypeptide: Probable aquaporin SIP1-2 (243 aa).

Transmembrane regions (helical) follow at residues 12-32 (VITFLWVILSATFGIQTAAIV) and 42-62 (WAPLVISTLVVFVSISIFTVI). Residues 72–74 (NPC) carry the NPA 1 motif. A run of 3 helical transmembrane segments spans residues 90-110 (FSLAIRSPAQAIGAAGGAITI), 135-155 (GAISEVVLSFSVTFLVLLIIL), and 162-182 (LAKTFLLALATVSVFVVGSKF). Residues 188 to 190 (NPA) carry the NPA 2 motif. A helical membrane pass occupies residues 210–230 (VYWISSYTGAILSAMLFRIIF).

This sequence belongs to the MIP/aquaporin (TC 1.A.8) family. SIP (TC 1.A.8.10) subfamily. In terms of tissue distribution, expressed in roots and above ground. Expressed in elongating regions of the root tips, cotyledons, minor veins and hydathode cells of the rosette leaves. Weakly expressed in vascular tissues of the flower petals, filaments of stamens, upper part of the styles and receptacles of the siliques.

It localises to the endoplasmic reticulum membrane. In terms of biological role, water channel required to facilitate the transport of water across cell membrane. The polypeptide is Probable aquaporin SIP1-2 (SIP1-2) (Arabidopsis thaliana (Mouse-ear cress)).